We begin with the raw amino-acid sequence, 1213 residues long: Filamin-A-interacting protein 1 (1213 aa).

The segment at 1–70 is disordered; that stretch reads MRSRNQGGES…TSGECERKTK (70 aa). Basic and acidic residues predominate over residues 61 to 70; that stretch reads TSGECERKTK. Position 138 is a phosphoserine (Ser-138). Coiled-coil stretches lie at residues 192-591 and 624-781; these read DYMN…ELSC and PEDN…LSKR. Disordered stretches follow at residues 878–900 and 949–976; these read NGPSITQEKGPRTNSSPGHPGEV and KPRITIIPSPNVMPQKQKSGDTTLGPER. Polar residues-rich tracts occupy residues 880–894 and 960–970; these read PSITQEKGPRTNSSP and VMPQKQKSGDT. Residue Ser-979 is modified to Phosphoserine. A disordered region spans residues 1103-1213; that stretch reads VSTGTVLRSP…STTSLGGGKG (111 aa). Residues 1125–1138 show a composition bias toward low complexity; that stretch reads VTSTITITPVTTSS. Residues 1139–1156 are compositionally biased toward polar residues; sequence ARGTQSVSGQDGSSQRPT. The segment covering 1168–1179 has biased composition (low complexity); it reads AGKPVVAAPGAG.

Belongs to the FILIP1 family. Interacts with FLNA. Interacts with RHOD (in GTP-bound form). In terms of tissue distribution, moderately expressed in adult heart and brain. Weakly expressed in lung, skeletal muscle, ovary, testis, kidney, and fetal brain, and hardly detectable in liver, pancreas, spleen, and fetal liver. Within brain, moderate expression is found in amygdala and caudate nucleus. Expressed in skin fibroblasts.

It is found in the cytoplasm. It localises to the cytoskeleton. By acting through a filamin-A/F-actin axis, it controls the start of neocortical cell migration from the ventricular zone. May be able to induce the degradation of filamin-A. The sequence is that of Filamin-A-interacting protein 1 (FILIP1) from Homo sapiens (Human).